The primary structure comprises 151 residues: SsrA-binding protein (151 aa).

This sequence belongs to the SmpB family.

It localises to the cytoplasm. In terms of biological role, required for rescue of stalled ribosomes mediated by trans-translation. Binds to transfer-messenger RNA (tmRNA), required for stable association of tmRNA with ribosomes. tmRNA and SmpB together mimic tRNA shape, replacing the anticodon stem-loop with SmpB. tmRNA is encoded by the ssrA gene; the 2 termini fold to resemble tRNA(Ala) and it encodes a 'tag peptide', a short internal open reading frame. During trans-translation Ala-aminoacylated tmRNA acts like a tRNA, entering the A-site of stalled ribosomes, displacing the stalled mRNA. The ribosome then switches to translate the ORF on the tmRNA; the nascent peptide is terminated with the 'tag peptide' encoded by the tmRNA and targeted for degradation. The ribosome is freed to recommence translation, which seems to be the essential function of trans-translation. This Geotalea uraniireducens (strain Rf4) (Geobacter uraniireducens) protein is SsrA-binding protein.